We begin with the raw amino-acid sequence, 160 residues long: Transcriptional repressor NrdR (160 aa).

Polar residues predominate over residues 1–11 (MRCPNCNSLDT). The disordered stretch occupies residues 1–20 (MRCPNCNSLDTQVKDSRPTE). A zinc finger spans residues 3 to 34 (CPNCNSLDTQVKDSRPTEDSSVIRRRRVCIAC). The 91-residue stretch at 49–139 (LTVIKRNGRR…VYRNFREAKD (91 aa)) folds into the ATP-cone domain.

This sequence belongs to the NrdR family. It depends on Zn(2+) as a cofactor.

Its function is as follows. Negatively regulates transcription of bacterial ribonucleotide reductase nrd genes and operons by binding to NrdR-boxes. This chain is Transcriptional repressor NrdR, found in Rhodopseudomonas palustris (strain BisB5).